Here is a 413-residue protein sequence, read N- to C-terminus: Type IV pilus assembly protein TapC (413 aa).

4 helical membrane-spanning segments follow: residues 180–200 (YPAMVILVAIVVTSILLLFVI), 227–247 (FMQHWWYVIFGGTAFAIFLYV), 286–306 (LSTTFSAGIPLVDALISAAGA), and 386–406 (IMVVLGVLVGGMVVAMYLPIF).

The protein belongs to the GSP F family.

The protein resides in the cell inner membrane. Involved in the translocation of the type IV pilin. The polypeptide is Type IV pilus assembly protein TapC (tapC) (Aeromonas hydrophila).